A 70-amino-acid polypeptide reads, in one-letter code: DNA-directed RNA polymerase subunit omega (70 aa).

The protein belongs to the RNA polymerase subunit omega family. The RNAP catalytic core consists of 2 alpha, 1 beta, 1 beta' and 1 omega subunit. When a sigma factor is associated with the core the holoenzyme is formed, which can initiate transcription.

The enzyme catalyses RNA(n) + a ribonucleoside 5'-triphosphate = RNA(n+1) + diphosphate. In terms of biological role, promotes RNA polymerase assembly. Latches the N- and C-terminal regions of the beta' subunit thereby facilitating its interaction with the beta and alpha subunits. This is DNA-directed RNA polymerase subunit omega from Bacillus cytotoxicus (strain DSM 22905 / CIP 110041 / 391-98 / NVH 391-98).